We begin with the raw amino-acid sequence, 102 residues long: Thioredoxin (102 aa).

In terms of domain architecture, Thioredoxin spans 1-102 (MVQVVSQENF…SLIKLISKHQ (102 aa)). Cysteines 28 and 31 form a disulfide.

Belongs to the thioredoxin family.

Participates in various redox reactions through the reversible oxidation of its active center dithiol to a disulfide and catalyzes dithiol-disulfide exchange reactions. The chain is Thioredoxin (trxA) from Chlamydia trachomatis serovar D (strain ATCC VR-885 / DSM 19411 / UW-3/Cx).